Consider the following 416-residue polypeptide: Probable F-box protein At5g47300 (416 aa).

The region spanning 40–86 (TLMLSDLPGDLLEEILCRVPATSLKQLRSTCKQWNNLFNNGRFTRKH) is the F-box domain.

The chain is Probable F-box protein At5g47300 from Arabidopsis thaliana (Mouse-ear cress).